The following is a 463-amino-acid chain: ATP-dependent rRNA helicase SPB4 (463 aa).

Positions 4 to 32 (KGIEDVAMNGRLKKEIEENGFGKMTEVQL) match the Q motif motif. The region spanning 35–205 (IPEVLKGKDV…RVFLRNPVSI (171 aa)) is the Helicase ATP-binding domain. 48–55 (SPTGTGKT) lines the ATP pocket. A DEAD box motif is present at residues 153-156 (DEAD). Residues 226–382 (KLLVLMDIVT…DIKSMISPEL (157 aa)) form the Helicase C-terminal domain. The tract at residues 444-463 (RDGKKRALPKKKYRKKRAIK) is disordered. Basic residues predominate over residues 446 to 463 (GKKRALPKKKYRKKRAIK).

This sequence belongs to the DEAD box helicase family. DDX55/SPB4 subfamily. Component of pre-60S ribosomal complexes.

Its subcellular location is the nucleus. The protein localises to the nucleolus. It carries out the reaction ATP + H2O = ADP + phosphate + H(+). Functionally, ATP-binding RNA helicase involved in the biogenesis of 60S ribosomal subunits. Binds 90S pre-ribosomal particles and dissociates from pre-60S ribosomal particles after processing of 27SB pre-rRNA. Required for the normal formation of 18S rRNA through the processing of pre-rRNAs at sites A0, A1 and A2, and the normal formation of 25S and 5.8S rRNAs through the processing of pre-rRNAs at sites C1 and C2. The polypeptide is ATP-dependent rRNA helicase SPB4 (Encephalitozoon cuniculi (strain GB-M1) (Microsporidian parasite)).